Consider the following 321-residue polypeptide: MNTIDNNNAAIAVNSVLSSTTDSTSSTTTSTSSISSSLLTDGRVDISKLLLEVQKLLREMVTTLQDYLQKQLAQSYDIQKAVFESQNKAIDEKKAGATAALIGGAISSVLGILGSFAAINSATKGASDVAQQAASTSAKSIGTVSEASTKALAKASEGIADAADDAAGAMQQTIATAAKAASRTSGITDDVATSAQKASQVAEEAADAAQELAQKAGLLSRFTAAAGRISGSTPFIVVTSLAEGTKTLPTTISESVKSNHDINEQRAKSVENLQASNLDTYKQDVRRAQDDISSRLRDMTTTARDLTDLINRMGQAARLAG.

The chain crosses the membrane as a helical span at residues 99–119; that stretch reads AALIGGAISSVLGILGSFAAI.

The protein belongs to the SctB/EspB family. As to quaternary structure, the core secretion machinery of the T3SS is composed of approximately 20 different proteins, including cytoplasmic components, a base, an export apparatus and a needle. This subunit is involved in the formation of a pore, called the translocon, in host membrane.

It is found in the secreted. It localises to the cell surface. Its subcellular location is the host membrane. Component of the type III secretion system (T3SS), also called injectisome, which is used to inject bacterial effector proteins into eukaryotic host cells. EspD and EspB are inserted into the host membrane where they form a pore and allow the translocation of effector proteins into the cytosol of target cells. Necessary for intimate attachment to epithelial cells. In Escherichia coli O127:H6 (strain E2348/69 / EPEC), this protein is Type 3 secretion system translocon protein SctB.